We begin with the raw amino-acid sequence, 295 residues long: MSILPIIKGEYKKDYNLKHLTWFKVGGNAEIFFKPFDSADLKSFLIQNNKKLPITTFGSGSNIIIRDGGIEGVVIKLGKNFNNIEFLDNHLIVGSSCLNYNLAKFCQANAISGFEFLVGIPGTIGGGVVMNAGAYGSAFQDIIVQIEALDFLGNFLTFTNKEIGFKYRGNNLPKDLILLKAIFKANKGDSQNILLKMNKINTTRSSTQPIKERTGGSTFKNPVGCKSWELIDKAGLRGYRIGGASMSELHCNFMINNGNATAKDLEDLGNFVRQKVFEDSGVELNWEIKRIGKYV.

One can recognise an FAD-binding PCMH-type domain in the interval 24–188 (KVGGNAEIFF…LKAIFKANKG (165 aa)). R168 is a catalytic residue. Residue S217 is the Proton donor of the active site. The active site involves E287.

The protein belongs to the MurB family. The cofactor is FAD.

It localises to the cytoplasm. It carries out the reaction UDP-N-acetyl-alpha-D-muramate + NADP(+) = UDP-N-acetyl-3-O-(1-carboxyvinyl)-alpha-D-glucosamine + NADPH + H(+). It functions in the pathway cell wall biogenesis; peptidoglycan biosynthesis. In terms of biological role, cell wall formation. This is UDP-N-acetylenolpyruvoylglucosamine reductase from Rickettsia typhi (strain ATCC VR-144 / Wilmington).